Consider the following 119-residue polypeptide: Holo-[acyl-carrier-protein] synthase (119 aa).

Residues aspartate 8 and glutamate 58 each contribute to the Mg(2+) site.

It belongs to the P-Pant transferase superfamily. AcpS family. The cofactor is Mg(2+).

It localises to the cytoplasm. It catalyses the reaction apo-[ACP] + CoA = holo-[ACP] + adenosine 3',5'-bisphosphate + H(+). Functionally, transfers the 4'-phosphopantetheine moiety from coenzyme A to a Ser of acyl-carrier-protein. This chain is Holo-[acyl-carrier-protein] synthase, found in Lactobacillus johnsonii (strain CNCM I-12250 / La1 / NCC 533).